The chain runs to 616 residues: Probable Xaa-Pro aminopeptidase P (616 aa).

Residues aspartate 413, aspartate 424, glutamate 522, and glutamate 536 each coordinate Mn(2+).

Belongs to the peptidase M24B family. Requires Mn(2+) as cofactor.

The catalysed reaction is Release of any N-terminal amino acid, including proline, that is linked to proline, even from a dipeptide or tripeptide.. Its function is as follows. Catalyzes the removal of a penultimate prolyl residue from the N-termini of peptides. The polypeptide is Probable Xaa-Pro aminopeptidase P (AMPP) (Paracoccidioides lutzii (strain ATCC MYA-826 / Pb01) (Paracoccidioides brasiliensis)).